The chain runs to 437 residues: Probable E3 ubiquitin-protein ligase TRIML2 (437 aa).

A B box-type zinc finger spans residues 14–55 (TEDAYCETHLEPTRLFCDVDQITLCSKCFQSQEHKHHMVCGI). Positions 19, 22, 41, and 47 each coordinate Zn(2+). Residues 55 to 200 (IQEAAENYRK…IVELEKKCGE (146 aa)) adopt a coiled-coil conformation. A B30.2/SPRY domain is found at 231–429 (DLSLCHIRGL…DSLTILQHGP (199 aa)).

It catalyses the reaction S-ubiquitinyl-[E2 ubiquitin-conjugating enzyme]-L-cysteine + [acceptor protein]-L-lysine = [E2 ubiquitin-conjugating enzyme]-L-cysteine + N(6)-ubiquitinyl-[acceptor protein]-L-lysine.. It participates in protein modification; protein ubiquitination. This Homo sapiens (Human) protein is Probable E3 ubiquitin-protein ligase TRIML2.